Here is a 224-residue protein sequence, read N- to C-terminus: MNQNQDKGQGLLGRKVGMMRIFTDDGDSIPVTVLDVSNNRVTQIKTSEVDGYSAVQVAFGSRRASRVNKASAGHFAKAGVEAGTVLKEFRVAATAASELKVGDVIAASLFEVGQKVDVQGVTIGKGYAGVIKRYNFGSGRATHGNSRSHNVPGSIGMAQDPGRVFPGKRMTGHLGDVTRTTQNLEIARIDADRQLLLVKGAVPGAKNGQVIVSPAVKVKAKKGA.

At Q159 the chain carries N5-methylglutamine.

The protein belongs to the universal ribosomal protein uL3 family. Part of the 50S ribosomal subunit. Forms a cluster with proteins L14 and L19. Methylated by PrmB.

One of the primary rRNA binding proteins, it binds directly near the 3'-end of the 23S rRNA, where it nucleates assembly of the 50S subunit. The chain is Large ribosomal subunit protein uL3 from Janthinobacterium sp. (strain Marseille) (Minibacterium massiliensis).